A 379-amino-acid chain; its full sequence is Chaperone protein DnaJ (379 aa).

Positions 5–70 constitute a J domain; sequence DYYEILGVPK…QKRAAYDQYG (66 aa). The CR-type zinc-finger motif lies at 134–212; that stretch reads GVTKEIRIPT…CHGHGRIEKT (79 aa). Zn(2+) is bound by residues Cys147, Cys150, Cys164, Cys167, Cys186, Cys189, Cys200, and Cys203. CXXCXGXG motif repeat units follow at residues 147–154, 164–171, 186–193, and 200–207; these read CEVCHGSG, CPTCHGAG, CPHCQGRG, and CNSCHGHG.

This sequence belongs to the DnaJ family. Homodimer. Zn(2+) is required as a cofactor.

It is found in the cytoplasm. Functionally, participates actively in the response to hyperosmotic and heat shock by preventing the aggregation of stress-denatured proteins and by disaggregating proteins, also in an autonomous, DnaK-independent fashion. Unfolded proteins bind initially to DnaJ; upon interaction with the DnaJ-bound protein, DnaK hydrolyzes its bound ATP, resulting in the formation of a stable complex. GrpE releases ADP from DnaK; ATP binding to DnaK triggers the release of the substrate protein, thus completing the reaction cycle. Several rounds of ATP-dependent interactions between DnaJ, DnaK and GrpE are required for fully efficient folding. Also involved, together with DnaK and GrpE, in the DNA replication of plasmids through activation of initiation proteins. This chain is Chaperone protein DnaJ, found in Cronobacter sakazakii (strain ATCC BAA-894) (Enterobacter sakazakii).